The following is a 272-amino-acid chain: NAD kinase (272 aa).

Residue Asp50 is the Proton acceptor of the active site. NAD(+) contacts are provided by residues 50–51 (DG), 126–127 (NE), Arg152, Asp154, 165–170 (TAYNKS), and Ala189.

Belongs to the NAD kinase family. It depends on a divalent metal cation as a cofactor.

Its subcellular location is the cytoplasm. The catalysed reaction is NAD(+) + ATP = ADP + NADP(+) + H(+). Involved in the regulation of the intracellular balance of NAD and NADP, and is a key enzyme in the biosynthesis of NADP. Catalyzes specifically the phosphorylation on 2'-hydroxyl of the adenosine moiety of NAD to yield NADP. This Streptococcus pneumoniae serotype 19F (strain G54) protein is NAD kinase.